We begin with the raw amino-acid sequence, 311 residues long: Mediator of RNA polymerase II transcription subunit 27 (311 aa).

A Phosphoserine modification is found at S132. An N6-methyllysine modification is found at K134.

It belongs to the Mediator complex subunit 27 family. As to quaternary structure, component of the Mediator complex, which is composed of MED1, MED4, MED6, MED7, MED8, MED9, MED10, MED11, MED12, MED13, MED13L, MED14, MED15, MED16, MED17, MED18, MED19, MED20, MED21, MED22, MED23, MED24, MED25, MED26, MED27, MED29, MED30, MED31, CCNC, CDK8 and CDC2L6/CDK11. The MED12, MED13, CCNC and CDK8 subunits form a distinct module termed the CDK8 module. Mediator containing the CDK8 module is less active than Mediator lacking this module in supporting transcriptional activation. Individual preparations of the Mediator complex lacking one or more distinct subunits have been variously termed ARC, CRSP, DRIP, PC2, SMCC and TRAP.

It localises to the nucleus. Its function is as follows. Component of the Mediator complex, a coactivator involved in the regulated transcription of nearly all RNA polymerase II-dependent genes. Mediator functions as a bridge to convey information from gene-specific regulatory proteins to the basal RNA polymerase II transcription machinery. Mediator is recruited to promoters by direct interactions with regulatory proteins and serves as a scaffold for the assembly of a functional preinitiation complex with RNA polymerase II and the general transcription factors. This chain is Mediator of RNA polymerase II transcription subunit 27 (MED27), found in Homo sapiens (Human).